The sequence spans 161 residues: Endoribonuclease YbeY (161 aa).

Zn(2+)-binding residues include histidine 121, histidine 125, and histidine 131.

It belongs to the endoribonuclease YbeY family. Requires Zn(2+) as cofactor.

The protein localises to the cytoplasm. Its function is as follows. Single strand-specific metallo-endoribonuclease involved in late-stage 70S ribosome quality control and in maturation of the 3' terminus of the 16S rRNA. The polypeptide is Endoribonuclease YbeY (Stenotrophomonas maltophilia (strain R551-3)).